The chain runs to 295 residues: uncharacterized protein (295 aa).

The ABC transporter domain occupies 2–226 (LSIESLCKSY…QQTNVFTLSV (225 aa)). 34–41 (GPNGAGKT) contributes to the ATP binding site.

The protein belongs to the ABC transporter superfamily.

This is an uncharacterized protein from Bacillus subtilis (strain 168).